The chain runs to 213 residues: Thymidylate kinase (213 aa).

10–17 (GLEGAGKT) contacts ATP.

It belongs to the thymidylate kinase family.

It carries out the reaction dTMP + ATP = dTDP + ADP. Phosphorylation of dTMP to form dTDP in both de novo and salvage pathways of dTTP synthesis. The polypeptide is Thymidylate kinase (Escherichia coli O6:H1 (strain CFT073 / ATCC 700928 / UPEC)).